Here is a 190-residue protein sequence, read N- to C-terminus: Interferon alpha-9 (190 aa).

A signal peptide spans 1 to 23; sequence MARPFAFLMVLVVISYWSTCSLG. 2 disulfide bridges follow: Cys-24-Cys-122 and Cys-52-Cys-162. Asn-101 carries N-linked (GlcNAc...) asparagine glycosylation.

It belongs to the alpha/beta interferon family.

The protein resides in the secreted. In terms of biological role, produced by macrophages, IFN-alpha have antiviral activities. Interferon stimulates the production of two enzymes: a protein kinase and an oligoadenylate synthetase. This is Interferon alpha-9 (Ifna9) from Mus musculus (Mouse).